The primary structure comprises 907 residues: Leucine-rich repeat-containing G-protein coupled receptor 5 (907 aa).

An N-terminal signal peptide occupies residues 1-21 (MDTSCVHMLLSLLALLQLVAA). Over 22 to 561 (GSSPGPDAIP…EHLFGSWLIR (540 aa)) the chain is Extracellular. Residues 25 to 66 (PGPDAIPRGCPSHCHCELDGRMLLRVDCSDLGLSELPSNLSV) enclose the LRRNT domain. Cystine bridges form between cysteine 34-cysteine 40 and cysteine 38-cysteine 52. N-linked (GlcNAc...) asparagine glycosylation is found at asparagine 63 and asparagine 77. LRR repeat units lie at residues 67-88 (FTSYLDLSMNNISQLPASLLHR), 91-112 (FLEELRLAGNALTHIPKGAFTG), 115-136 (SLKVLMLQNNQLRQVPEEALQN), 139-160 (SLQSLRLDANHISYVPPSCFSG), 163-184 (SLRHLWLDDNALTDVPVQAFRS), 187-208 (ALQAMTLALNKIHHIADYAFGN), 211-232 (SLVVLHLHNNRIHSLGKKCFDG), 235-256 (SLETLDLNYNNLDEFPTAIKTL), 258-279 (NLKELGFHSNNIRSIPERAFVG), 282-303 (SLITIHFYDNPIQFVGVSAFQH), 306-325 (ELRTLTLNGASHITEFPHLT), 329-350 (TLESLTLTGAKISSLPQAVCDQ), 353-374 (NLQVLDLSYNLLEDLPSLSGCQ), 375-396 (KLQKIDLRHNEIYEIKGSTFQQ), 399-420 (NLRSLNLAWNKIAIIHPNAFST), and 423-446 (SLIKLDLSSNLLSSFPVTGLHGLT). The N-linked (GlcNAc...) asparagine glycan is linked to asparagine 208. A disulfide bridge connects residues cysteine 348 and cysteine 373. Cysteine 479 and cysteine 541 are disulfide-bonded. A helical transmembrane segment spans residues 562-582 (IGVWTTAVLALSCNALVALTV). Residues 583–593 (FRTPLYISSIK) are Cytoplasmic-facing. Residues 594–614 (LLIGVIAVVDILMGVSSAVLA) form a helical membrane-spanning segment. Topologically, residues 615 to 638 (AVDAFTFGRFAQHGAWWEDGIGCQ) are extracellular. Residues cysteine 637 and cysteine 712 are joined by a disulfide bond. Residues 639-659 (IVGFLSIFASESSIFLLTLAA) traverse the membrane as a helical segment. Residues 660-682 (LERGFSVKCSSKFEVKAPLFSLR) are Cytoplasmic-facing. A helical transmembrane segment spans residues 683 to 703 (AIVLLCVLLALTIATIPLLGG). Topologically, residues 704 to 723 (SKYNASPLCLPLPFGEPSTT) are extracellular. Residues 724 to 744 (GYMVALVLLNSLCFLIMTIAY) form a helical membrane-spanning segment. Over 745-767 (TKLYCSLEKGELENLWDCSMVKH) the chain is Cytoplasmic. Residues 768 to 788 (IALLLFANCILYCPVAFLSFS) form a helical membrane-spanning segment. Residues 789 to 802 (SLLNLTFISPDVIK) lie on the Extracellular side of the membrane. N-linked (GlcNAc...) asparagine glycosylation is present at asparagine 792. Residues 803 to 823 (FILLVIVPLPSCLNPLLYIVF) traverse the membrane as a helical segment. Over 824–907 (NPHFKEDMGS…LSSVAFVPCL (84 aa)) the chain is Cytoplasmic.

This sequence belongs to the G-protein coupled receptor 1 family. Identified in a complex composed of RNF43, LGR5 and RSPO1. Also interacts with other R-spondin ligands, including RSPO2, RSPO3 and RSPO4. In terms of tissue distribution, expressed in the intestinal epithelium (at protein level). Expressed in the gonads, the adrenal gland, and in the brain. In the central nervous system expression is restricted to the olfactory bulb. In the adrenal gland detected only in the neural-crest derived chromaffin cells of the medulla, but not in the cells of the adrenal cortex. In the gonads, the expression is high in Graafian follicle, but absent from primary and secondary follicles. In the intestine, exclusively expressed in cycling crypt base columnar cells. Expressed in the lower bulge and secondary germ area of telogen hair follicles and in the lower outer root sheath of anagen hair follicle.

It is found in the cell membrane. It localises to the golgi apparatus. The protein resides in the trans-Golgi network membrane. Receptor for R-spondins that potentiates the canonical Wnt signaling pathway and acts as a stem cell marker of the intestinal epithelium and the hair follicle. Upon binding to R-spondins (RSPO1, RSPO2, RSPO3 or RSPO4), associates with phosphorylated LRP6 and frizzled receptors that are activated by extracellular Wnt receptors, triggering the canonical Wnt signaling pathway to increase expression of target genes. In contrast to classical G-protein coupled receptors, does not activate heterotrimeric G-proteins to transduce the signal. Involved in the development and/or maintenance of the adult intestinal stem cells during postembryonic development. This Mus musculus (Mouse) protein is Leucine-rich repeat-containing G-protein coupled receptor 5 (Lgr5).